The chain runs to 143 residues: MSKAASQYATLEDLPSKPKRPQTGFFIYKSEVFAKRRTECPTLKVPEIVSKISEEYKALPEKEKQKYEEAYRKEKATYDKQNDQWKEKYGDIEKSLKDQAKKALKEKTKKSKAAEKELEKSKKKAPAAAPAKKDDKKAPAKKK.

Positions 1 to 22 (MSKAASQYATLEDLPSKPKRPQ) are disordered. The segment at residues 18-86 (PKRPQTGFFI…TYDKQNDQWK (69 aa)) is a DNA-binding region (HMG box). Residue Ala70 is modified to Blocked amino end (Ala). Basic and acidic residues-rich tracts occupy residues 100–120 (AKKA…ELEK) and 131–143 (AKKD…AKKK). Residues 100–143 (AKKALKEKTKKSKAAEKELEKSKKKAPAAAPAKKDDKKAPAKKK) form a disordered region.

The protein localises to the nucleus. Its subcellular location is the chromosome. In Tetrahymena thermophila, this protein is High mobility group protein B.